A 344-amino-acid chain; its full sequence is MAYTLDDFDYDLPHELIAQTPIKQRDTSRLLVLDHQANTLEDKHFYDILDELHAGDAVVMNNSRVMPARLYGIKPETGGHVEVLLLHNVEGDVWETLMKPAKRLRVGTTVTFGDGQLTATVTEEREDGIRLIEFHYDGIFMEILEQLGETPLPPYIKEKLDDPDRYQTVYAKENGSAAAPTAGLHWTQELLDQVAAKGVKLVYITLHVGLGTFRPVEEANIEDHKMHSEFYRLDEAAAATLNEVRANGGRIIATGTTSIRTLETIGTKFKGEIKPDSGWTDIFIKPGYQWQVVNAFITNFHLPKSTLVMLVAAFTGRDQILNAYHHAIEEKYRFFSFGDAMFIK.

This sequence belongs to the QueA family. Monomer.

It is found in the cytoplasm. The catalysed reaction is 7-aminomethyl-7-carbaguanosine(34) in tRNA + S-adenosyl-L-methionine = epoxyqueuosine(34) in tRNA + adenine + L-methionine + 2 H(+). It functions in the pathway tRNA modification; tRNA-queuosine biosynthesis. In terms of biological role, transfers and isomerizes the ribose moiety from AdoMet to the 7-aminomethyl group of 7-deazaguanine (preQ1-tRNA) to give epoxyqueuosine (oQ-tRNA). The sequence is that of S-adenosylmethionine:tRNA ribosyltransferase-isomerase from Levilactobacillus brevis (strain ATCC 367 / BCRC 12310 / CIP 105137 / JCM 1170 / LMG 11437 / NCIMB 947 / NCTC 947) (Lactobacillus brevis).